The chain runs to 182 residues: Probable peptidyl-prolyl cis-trans isomerase A (182 aa).

The region spanning 13–181 (QNATATLHTN…EPVVIDSITI (169 aa)) is the PPIase cyclophilin-type domain. The segment at 161–182 (TTATDGNDRPTEPVVIDSITIS) is disordered.

This sequence belongs to the cyclophilin-type PPIase family.

The protein resides in the cytoplasm. It catalyses the reaction [protein]-peptidylproline (omega=180) = [protein]-peptidylproline (omega=0). Its function is as follows. PPIases accelerate the folding of proteins. It catalyzes the cis-trans isomerization of proline imidic peptide bonds in oligopeptides. The chain is Probable peptidyl-prolyl cis-trans isomerase A (ppiA) from Mycobacterium leprae (strain TN).